Consider the following 518-residue polypeptide: Probable carboxypeptidase 2 (518 aa).

The signal sequence occupies residues methionine 1 to alanine 21. Asparagine 46 is a glycosylation site (N-linked (GlcNAc...) asparagine). Residues proline 53–glutamate 76 form a disordered region. Residues glycine 71 to alanine 351 enclose the Peptidase M14 domain. Asparagine 116 carries N-linked (GlcNAc...) asparagine glycosylation. Zn(2+) contacts are provided by histidine 136, glutamate 139, and histidine 224. Glutamate 322 acts as the Proton donor/acceptor in catalysis. N-linked (GlcNAc...) asparagine glycosylation is found at asparagine 393 and asparagine 459.

This sequence belongs to the peptidase M14 family. The cofactor is Zn(2+).

It is found in the secreted. In terms of biological role, extracellular metalloprotease that contributes to pathogenicity. This Trichophyton verrucosum (strain HKI 0517) protein is Probable carboxypeptidase 2 (MCPB).